We begin with the raw amino-acid sequence, 1477 residues long: Ring canal kelch protein (1477 aa).

3 disordered regions span residues 19-62, 76-96, and 108-137; these read LSNG…PGLG, LLQQ…EGSG, and SQNS…YSNE. Residues 20 to 46 show a composition bias toward low complexity; that stretch reads SNGNSNNNNQQQQQQQQGQNPQQPAQN. Residues Ser108 and Ser111 each carry the phosphoserine modification. Residues 157-223 form the BTB domain; that stretch reads CDVILVADDV…VYTATVEVNE (67 aa). 6 Kelch repeats span residues 404-449, 450-496, 498-543, 545-592, 594-639, and 641-687; these read ILLV…VLGD, KVYA…VLNG, IYAV…VVHG, LYAV…VLNN, LYAV…AHDG, and LYVV…MIDK. Position 690 (Sec690) is a non-standard amino acid, selenocysteine. Disordered regions lie at residues 744-841, 1119-1200, 1291-1326, 1359-1416, and 1446-1477; these read PAAP…PQRI, HSAA…GNGT, RDAN…QYED, PLLQ…FKPK, and PVSL…EHND. Composition is skewed to low complexity over residues 763 to 813 and 820 to 839; these read APIG…ANNN and AAPA…QQPQ. Over residues 1125–1137 the composition is skewed to polar residues; it reads IPSSSNINANRTT. Over residues 1166-1192 the composition is skewed to low complexity; it reads KTTSTGSGKSVTLAKKTSTAAARSSSS. Composition is skewed to low complexity over residues 1374 to 1391 and 1456 to 1477; these read QQRR…QSQQ and TTSS…EHND.

Both proteins are expressed in ovaries, male testis, ovariectomized females, cuticle, salivary gland and imaginal disks. Kelch short protein is the predominant form and is also expressed in fat bodies. On entry into metamorphosis levels of full-length protein increase in testis and imaginal disks.

The protein resides in the cytoplasm. Its subcellular location is the cytoskeleton. Functionally, component of ring canals that regulates the flow of cytoplasm between cells. May be involved in the regulation of cytoplasm flow from nurse cells to the oocyte during oogenesis. Binds actin. The protein is Ring canal kelch protein (kel) of Drosophila melanogaster (Fruit fly).